Consider the following 294-residue polypeptide: MNAVNILIGLMPMIGWGIFPVIVGKIGGKPASQILGTTFGTLILAIVVAIFRGTPIPETKTFIFCLISGACWALAQIITFHVFETMGVSRTMPITTGFQLVGASLWGVFVLGNWSSSQSKLIGFTAIALIIIGVYLTAWSEDKSSASKSGAVKGILLLLVGELGYLGYSAFPQAVSADGFQGFLPQAIGMTIVGIIFGLTQTKKDYKPFKEATSYKNIFSGFFFAFAALTYLISAQPSVNGLATGFVLSQTSVIFATIGGIYILKEKKSKKEMIAVMVGLLLVLVAGSVTAFIK.

The next 10 helical transmembrane spans lie at 2 to 24, 34 to 56, 63 to 82, 92 to 114, 121 to 140, 150 to 172, 179 to 198, 218 to 235, 242 to 264, and 274 to 293; these read NAVN…VIVG, ILGT…GTPI, IFCL…TFHV, MPIT…LGNW, LIGF…TAWS, GAVK…SAFP, GFQG…IIFG, IFSG…LISA, LATG…IYIL, and IAVM…TAFI.

The protein belongs to the GRP transporter (TC 2.A.7.5) family.

Its subcellular location is the cell membrane. Could be involved in the uptake of ribose. This Latilactobacillus sakei subsp. sakei (strain 23K) (Lactobacillus sakei subsp. sakei) protein is Putative ribose uptake protein RbsU (rbsU).